A 382-amino-acid chain; its full sequence is Mannitol-1-phosphate 5-dehydrogenase (382 aa).

3 to 14 (ALHFGAGNIGRG) is a binding site for NAD(+).

Belongs to the mannitol dehydrogenase family.

It carries out the reaction D-mannitol 1-phosphate + NAD(+) = beta-D-fructose 6-phosphate + NADH + H(+). The sequence is that of Mannitol-1-phosphate 5-dehydrogenase from Mannheimia succiniciproducens (strain KCTC 0769BP / MBEL55E).